Consider the following 334-residue polypeptide: Aspartate carbamoyltransferase catalytic subunit (334 aa).

Residues Arg71 and Thr72 each contribute to the carbamoyl phosphate site. L-aspartate is bound at residue Lys99. The carbamoyl phosphate site is built by Arg121, His151, and Gln154. 2 residues coordinate L-aspartate: Arg184 and Arg239. Gly280 and Pro281 together coordinate carbamoyl phosphate.

This sequence belongs to the aspartate/ornithine carbamoyltransferase superfamily. ATCase family. In terms of assembly, heterododecamer (2C3:3R2) of six catalytic PyrB chains organized as two trimers (C3), and six regulatory PyrI chains organized as three dimers (R2).

The catalysed reaction is carbamoyl phosphate + L-aspartate = N-carbamoyl-L-aspartate + phosphate + H(+). It functions in the pathway pyrimidine metabolism; UMP biosynthesis via de novo pathway; (S)-dihydroorotate from bicarbonate: step 2/3. Functionally, catalyzes the condensation of carbamoyl phosphate and aspartate to form carbamoyl aspartate and inorganic phosphate, the committed step in the de novo pyrimidine nucleotide biosynthesis pathway. The sequence is that of Aspartate carbamoyltransferase catalytic subunit from Pseudomonas entomophila (strain L48).